The following is a 225-amino-acid chain: MAAASATSTDFVRFALDEGVLRFGSFKVKSGRTSPYFFNAGLFNSGASVGRLAQFYAQALVDSGIAFDMLFGPAYKGIPLATATAVALAGHPAMQGRDVPFAFNRKEAKDHGEGGTLVGAPLQGRVVIIDDVITAGTSVRESVEIIRAAGAEPAAVLIALDRQERAGPDDALSPHSAVQDVAKTYGMPVVSIASLADILALLQGDAQFAGNREAVLAYRGKYGVV.

Residue Lys-29 participates in 5-phospho-alpha-D-ribose 1-diphosphate binding. 37–38 (FF) contributes to the orotate binding site. 5-phospho-alpha-D-ribose 1-diphosphate-binding positions include 75–76 (YK), Arg-105, Lys-106, Lys-109, His-111, and 130–138 (DDVITAGTS). Orotate-binding residues include Thr-134 and Arg-162.

The protein belongs to the purine/pyrimidine phosphoribosyltransferase family. PyrE subfamily. Homodimer. It depends on Mg(2+) as a cofactor.

It catalyses the reaction orotidine 5'-phosphate + diphosphate = orotate + 5-phospho-alpha-D-ribose 1-diphosphate. It participates in pyrimidine metabolism; UMP biosynthesis via de novo pathway; UMP from orotate: step 1/2. Its function is as follows. Catalyzes the transfer of a ribosyl phosphate group from 5-phosphoribose 1-diphosphate to orotate, leading to the formation of orotidine monophosphate (OMP). The sequence is that of Orotate phosphoribosyltransferase from Bordetella petrii (strain ATCC BAA-461 / DSM 12804 / CCUG 43448).